The sequence spans 350 residues: Putative [LysW]-lysine/[LysW]-ornithine hydrolase (350 aa).

Histidine 72 serves as a coordination point for Zn(2+). The active site involves aspartate 74. Aspartate 96 contacts Zn(2+). The active-site Proton acceptor is glutamate 128. 3 residues coordinate Zn(2+): glutamate 129, glutamate 152, and histidine 321.

The protein belongs to the peptidase M20A family. LysK subfamily. It depends on Zn(2+) as a cofactor. Requires Co(2+) as cofactor.

It localises to the cytoplasm. The enzyme catalyses [amino-group carrier protein]-C-terminal-gamma-(L-lysyl)-L-glutamate + H2O = [amino-group carrier protein]-C-terminal-L-glutamate + L-lysine. The catalysed reaction is [amino-group carrier protein]-C-terminal-gamma-(L-ornithyl)-L-glutamate + H2O = [amino-group carrier protein]-C-terminal-L-glutamate + L-ornithine. The protein operates within amino-acid biosynthesis; L-lysine biosynthesis via AAA pathway; L-lysine from L-alpha-aminoadipate (Thermus route): step 5/5. It participates in amino-acid biosynthesis; L-arginine biosynthesis. Its function is as follows. Catalyzes the release of L-lysine from [LysW]-gamma-L-lysine and the release of L-ornithine from [LysW]-L-ornithine. The chain is Putative [LysW]-lysine/[LysW]-ornithine hydrolase from Aeropyrum pernix (strain ATCC 700893 / DSM 11879 / JCM 9820 / NBRC 100138 / K1).